Here is a 49-residue protein sequence, read N- to C-terminus: uncharacterized protein (49 aa).

This is an uncharacterized protein from Bacillus subtilis (strain 168).